Consider the following 741-residue polypeptide: Catalase-peroxidase 2 (741 aa).

Residues 1 to 28 form the signal peptide; that stretch reads MQKKRVGKSVVAALAIIAMSAGTVAAWA. The segment at residues 107–228 is a cross-link (tryptophyl-tyrosyl-methioninium (Trp-Tyr) (with M-254)); that stretch reads WHGAGTYRTY…LAATQMGLIY (122 aa). H108 (proton acceptor) is an active-site residue. The segment at residues 228–254 is a cross-link (tryptophyl-tyrosyl-methioninium (Tyr-Met) (with W-107)); that stretch reads YVNPEGPNGNPDPVAAAKDIRDAFGRM. H269 serves as a coordination point for heme b.

This sequence belongs to the peroxidase family. Peroxidase/catalase subfamily. Homodimer or homotetramer. The cofactor is heme b. Formation of the three residue Trp-Tyr-Met cross-link is important for the catalase, but not the peroxidase activity of the enzyme.

The catalysed reaction is H2O2 + AH2 = A + 2 H2O. The enzyme catalyses 2 H2O2 = O2 + 2 H2O. Functionally, bifunctional enzyme with both catalase and broad-spectrum peroxidase activity. This chain is Catalase-peroxidase 2, found in Burkholderia ambifaria (strain ATCC BAA-244 / DSM 16087 / CCUG 44356 / LMG 19182 / AMMD) (Burkholderia cepacia (strain AMMD)).